A 41-amino-acid chain; its full sequence is Photosystem I reaction center subunit IX (41 aa).

The helical transmembrane segment at 7–27 threads the bilayer; sequence YLSVAPVLSTLWFGALAGLLI.

This sequence belongs to the PsaJ family.

Its subcellular location is the plastid. The protein localises to the chloroplast thylakoid membrane. Functionally, may help in the organization of the PsaE and PsaF subunits. The chain is Photosystem I reaction center subunit IX from Jasminum nudiflorum (Winter jasmine).